Consider the following 99-residue polypeptide: Small ribosomal subunit protein bS20 (99 aa).

This sequence belongs to the bacterial ribosomal protein bS20 family.

Its function is as follows. Binds directly to 16S ribosomal RNA. This chain is Small ribosomal subunit protein bS20, found in Chlamydia pneumoniae (Chlamydophila pneumoniae).